We begin with the raw amino-acid sequence, 236 residues long: NEP1-interacting protein 1 (236 aa).

The Lumenal, thylakoid segment spans residues Met-1–Ala-44. Residues Val-45–Ile-65 form a helical membrane-spanning segment. Residues Gly-66–Ala-78 are Stromal-facing. A helical transmembrane segment spans residues Val-79–Trp-99. Over Lys-100–Ser-104 the chain is Lumenal, thylakoid. The chain crosses the membrane as a helical span at residues Arg-105–Val-125. Residues Arg-126 to Leu-236 lie on the Stromal side of the membrane. An RING-type; atypical zinc finger spans residues Cys-191–Arg-233.

The protein belongs to the RING-type zinc finger family. NIP subfamily. In terms of assembly, interacts with RPOT2.

The protein resides in the plastid. It localises to the chloroplast thylakoid membrane. In terms of biological role, intrinsic thylakoid membrane protein that fixes RPOT2 on the stromal side of the thylakoid membrane. This chain is NEP1-interacting protein 1 (NIP1), found in Arabidopsis thaliana (Mouse-ear cress).